We begin with the raw amino-acid sequence, 559 residues long: U-box domain-containing protein 41 (559 aa).

Disordered stretches follow at residues 1–30 (MGGN…KHDE) and 121–156 (RMDK…SPSD). Residues 12–24 (HQRSSSATTTTLP) show a composition bias toward polar residues. The region spanning 30–104 (ETPPEFLCPI…FSWCDRQKVD (75 aa)) is the U-box domain. ARM repeat units follow at residues 266-305 (EDLR…NLSL), 307-346 (KQNK…SLAL), 348-388 (DENK…HLSL), 390-427 (PSNR…NLAA), and 428-472 (CPDG…TLCQ).

It catalyses the reaction S-ubiquitinyl-[E2 ubiquitin-conjugating enzyme]-L-cysteine + [acceptor protein]-L-lysine = [E2 ubiquitin-conjugating enzyme]-L-cysteine + N(6)-ubiquitinyl-[acceptor protein]-L-lysine.. It functions in the pathway protein modification; protein ubiquitination. Functionally, functions as an E3 ubiquitin ligase. The sequence is that of U-box domain-containing protein 41 (PUB41) from Arabidopsis thaliana (Mouse-ear cress).